A 177-amino-acid polypeptide reads, in one-letter code: Apoptosis regulatory protein Siva (177 aa).

Tyr-34 is modified (phosphotyrosine; by ABL2). Positions 36–55 are interaction with BCL2L1 isoform Bcl-x(L) and inhibition of BCL2L1 anti-apoptotic activity; the sequence is REVFERTKQLLFQGAQAYRD.

Binds through its N-terminal region to the C-terminus of CD27 and to PXMP2/PMP22. Binds to the C-terminus of TNFRSF18/GITR. Binds to BCL2L1/BCLX isoform Bcl-x(L) but not to BAX. It depends on Zn(2+) as a cofactor. In post-ischemic kidney, found in cells lining the S3 segment of proximal tubules at 12 hours and 1 day post-ischemia. At five and seven days post-ischemia, found in epithelial cells of papillary proliferations in regenerating tubules.

Its subcellular location is the cytoplasm. The protein resides in the nucleus. Its function is as follows. Induces CD27-mediated apoptosis. Inhibits BCL2L1 isoform Bcl-x(L) anti-apoptotic activity. Inhibits activation of NF-kappa-B and promotes T-cell receptor-mediated apoptosis. The protein is Apoptosis regulatory protein Siva (Siva1) of Rattus norvegicus (Rat).